Reading from the N-terminus, the 108-residue chain is Cell division topological specificity factor (108 aa).

Belongs to the MinE family.

Functionally, prevents the cell division inhibition by proteins MinC and MinD at internal division sites while permitting inhibition at polar sites. This ensures cell division at the proper site by restricting the formation of a division septum at the midpoint of the long axis of the cell. The polypeptide is Cell division topological specificity factor (Prochlorococcus marinus (strain MIT 9215)).